Consider the following 650-residue polypeptide: Sodium-dependent phosphate transporter 2 (650 aa).

The Extracellular portion of the chain corresponds to 1–5 (MAMDG). A helical transmembrane segment spans residues 6–26 (YLWMVILGFIIAFILAFSVGA). The Cytoplasmic portion of the chain corresponds to 27–46 (NDVANSFGTAVGSGVVTLRQ). A helical membrane pass occupies residues 47–67 (ACILASIFETTGSVLLGAKVG). At 68–83 (ETIRKGIIDVNLYNDT) the chain is on the extracellular side. Residue Asn-81 is glycosylated (N-linked (GlcNAc...) asparagine). The chain crosses the membrane as a helical span at residues 84 to 104 (VVTLMAGEVSAMVGSAVWQLI). Topologically, residues 105 to 109 (ASFLR) are cytoplasmic. Residues 110-130 (LPISGTHCIVGSTIGFSLVAN) traverse the membrane as a helical segment. Residues 131–142 (GTKGVQWMELVK) are Extracellular-facing. The helical transmembrane segment at 143–163 (IVASWFISPLLSGFMSGVLFV) threads the bilayer. Over 164-192 (LIRMFILTKEDPVPNGLQALPLFYAATIA) the chain is Cytoplasmic. A helical transmembrane segment spans residues 193-212 (INVFSIMYTGAPVLGLSLPI). A topological domain (extracellular) is located at residue Trp-213. The chain crosses the membrane as a helical span at residues 214–234 (AIALISFGVALLFAFFVWLFV). The Cytoplasmic portion of the chain corresponds to 235–482 (CPWMRRKIAG…EEKEEKDTAE (248 aa)). Residues Ser-253, Ser-256, Ser-259, Ser-268, Ser-315, and Ser-384 each carry the phosphoserine modification. The tract at residues 268–310 (SPFKELPGAKASDDSAVPLTNPTGEAVGPSEGTSTGNHPRTAY) is disordered. A helical membrane pass occupies residues 483-503 (VHLLFHFLQVLTACFGSFAHG). Over 504–530 (GNDVSNAIGPLVALWLIYEQGGVMQEA) the chain is Extracellular. A helical membrane pass occupies residues 531 to 551 (ATPVWLLFYGGVGICTGLWVW). At 552-571 (GRRVIQTMGKDLTPITPSSG) the chain is on the cytoplasmic side. Residues 572–586 (FTIELASAFTVVIAS) traverse the membrane as a helical segment. Over 587-593 (NIGLPVS) the chain is Extracellular. The helical transmembrane segment at 594-609 (TTHCKVGSVVAVGWIR) threads the bilayer. Residues 610–621 (SRKAVDWHLFRN) are Cytoplasmic-facing. Residues 622–642 (IFVAWFVTVPVAGLFSAAIMA) traverse the membrane as a helical segment. The Extracellular segment spans residues 643-650 (IFMYGILS).

The protein belongs to the inorganic phosphate transporter (PiT) (TC 2.A.20) family. Homodimer.

It localises to the cell membrane. The protein resides in the apical cell membrane. The catalysed reaction is 2 Na(+)(out) + phosphate(out) = 2 Na(+)(in) + phosphate(in). In terms of biological role, sodium-phosphate symporter which preferentially transports the monovalent form of phosphate with a stoichiometry of two sodium ions per phosphate ion. Plays a critical role in the determination of bone quality and strength by providing phosphate for bone mineralization. Required to maintain normal cerebrospinal fluid phosphate levels. Mediates phosphate-induced calcification of vascular smooth muscle cells (VCMCs) and can functionally compensate for loss of SLC20A1 in VCMCs. Its function is as follows. (Microbial infection) Functions as a retroviral receptor and confers hamster cells susceptibility to infection to Gibbon Ape Leukemia Virus (GaLV) and amphotropic murine leukemia virus (A-MuLV). The chain is Sodium-dependent phosphate transporter 2 (SLC20A2) from Cricetulus griseus (Chinese hamster).